The primary structure comprises 62 residues: Photosystem II reaction center protein Z (62 aa).

2 helical membrane passes run 8 to 28 (LVSI…VILV) and 41 to 61 (YASA…NSFV).

Belongs to the PsbZ family. PSII is composed of 1 copy each of membrane proteins PsbA, PsbB, PsbC, PsbD, PsbE, PsbF, PsbH, PsbI, PsbJ, PsbK, PsbL, PsbM, PsbT, PsbX, PsbY, PsbZ, Psb30/Ycf12, at least 3 peripheral proteins of the oxygen-evolving complex and a large number of cofactors. It forms dimeric complexes.

It localises to the plastid. It is found in the chloroplast thylakoid membrane. May control the interaction of photosystem II (PSII) cores with the light-harvesting antenna, regulates electron flow through the 2 photosystem reaction centers. PSII is a light-driven water plastoquinone oxidoreductase, using light energy to abstract electrons from H(2)O, generating a proton gradient subsequently used for ATP formation. In Guillardia theta (Cryptophyte), this protein is Photosystem II reaction center protein Z.